The sequence spans 154 residues: Periplasmic nitrate reductase, electron transfer subunit (154 aa).

The first 24 residues, 1–24 (MSMHPALRLLATVLVALGAGPAFT), serve as a signal peptide directing secretion. Positions 27–47 (APRLTGADRPMSEVAAPPLPE) are disordered. H68, C82, C85, H86, H103, C122, C125, and H126 together coordinate heme c.

The protein belongs to the NapB family. Component of the periplasmic nitrate reductase NapAB complex composed of NapA and NapB. Binds 2 heme C groups per subunit.

The protein localises to the periplasm. Functionally, electron transfer subunit of the periplasmic nitrate reductase complex NapAB. Receives electrons from the membrane-anchored tetraheme c-type NapC protein and transfers these to NapA subunit, thus allowing electron flow between membrane and periplasm. Essential for periplasmic nitrate reduction with nitrate as the terminal electron acceptor. This is Periplasmic nitrate reductase, electron transfer subunit from Cereibacter sphaeroides (Rhodobacter sphaeroides).